A 95-amino-acid polypeptide reads, in one-letter code: Large ribosomal subunit protein bL27 (95 aa).

A propeptide spanning residues 1–6 is cleaved from the precursor; it reads MKLQLF. A disordered region spans residues 1-25; sequence MKLQLFAHKKGVGSSRNGRDSESKR.

The protein belongs to the bacterial ribosomal protein bL27 family. Post-translationally, the N-terminus is cleaved by ribosomal processing cysteine protease Prp.

The polypeptide is Large ribosomal subunit protein bL27 (Thermoanaerobacter pseudethanolicus (strain ATCC 33223 / 39E) (Clostridium thermohydrosulfuricum)).